The following is a 542-amino-acid chain: Trans-alpha-bergamotene synthase (542 aa).

Mg(2+) contacts are provided by aspartate 295, aspartate 299, aspartate 439, threonine 443, and glutamate 447. Positions aspartate 295–aspartate 299 match the DDXXD motif motif.

Belongs to the terpene synthase family. Mg(2+) serves as cofactor.

It catalyses the reaction (2E,6E)-farnesyl diphosphate = (1S,5S,6R)-alpha-bergamotene + diphosphate. It functions in the pathway secondary metabolite biosynthesis; terpenoid biosynthesis. Its function is as follows. Sesquiterpene synthase converting farnesyl diphosphate to trans-alpha-bergamotene as the major product. The chain is Trans-alpha-bergamotene synthase from Phyla dulcis (Aztec sweet herb).